A 375-amino-acid polypeptide reads, in one-letter code: tRNA-specific 2-thiouridylase MnmA (375 aa).

ATP is bound by residues 12-19 (GMSGGVDS) and methionine 38. The interval 98–100 (NPD) is interaction with target base in tRNA. Cysteine 103 serves as the catalytic Nucleophile. Cysteine 103 and cysteine 200 are joined by a disulfide. ATP is bound at residue glycine 127. Positions 150–152 (KDQ) are interaction with tRNA. Residue cysteine 200 is the Cysteine persulfide intermediate of the active site. The interaction with tRNA stretch occupies residues 312-313 (RY).

It belongs to the MnmA/TRMU family.

Its subcellular location is the cytoplasm. It catalyses the reaction S-sulfanyl-L-cysteinyl-[protein] + uridine(34) in tRNA + AH2 + ATP = 2-thiouridine(34) in tRNA + L-cysteinyl-[protein] + A + AMP + diphosphate + H(+). Functionally, catalyzes the 2-thiolation of uridine at the wobble position (U34) of tRNA, leading to the formation of s(2)U34. The sequence is that of tRNA-specific 2-thiouridylase MnmA from Levilactobacillus brevis (strain ATCC 367 / BCRC 12310 / CIP 105137 / JCM 1170 / LMG 11437 / NCIMB 947 / NCTC 947) (Lactobacillus brevis).